Consider the following 147-residue polypeptide: Hemoglobin subunit beta (147 aa).

Residues 3 to 147 (EWTDFERATI…VVSSLGRQYH (145 aa)) enclose the Globin domain. Residues H64 and H93 each contribute to the heme b site.

It belongs to the globin family. Hb 1 is a heterotetramer of two alpha-1 and two beta chains. Hb 2 is a heterotetramer of two alpha-2 and two beta chains. Red blood cells.

Involved in oxygen transport from gills to the various peripheral tissues. The sequence is that of Hemoglobin subunit beta (hbb) from Cottoperca gobio (Frogmouth).